Reading from the N-terminus, the 61-residue chain is Small ribosomal subunit protein uS14 (61 aa).

Zn(2+) contacts are provided by C24, C27, C40, and C43.

Belongs to the universal ribosomal protein uS14 family. Zinc-binding uS14 subfamily. In terms of assembly, part of the 30S ribosomal subunit. Contacts proteins S3 and S10. It depends on Zn(2+) as a cofactor.

Its function is as follows. Binds 16S rRNA, required for the assembly of 30S particles and may also be responsible for determining the conformation of the 16S rRNA at the A site. This chain is Small ribosomal subunit protein uS14, found in Treponema denticola (strain ATCC 35405 / DSM 14222 / CIP 103919 / JCM 8153 / KCTC 15104).